Here is a 115-residue protein sequence, read N- to C-terminus: Ubiquitin-related modifier 1 (115 aa).

G115 bears the 1-thioglycine mark. Residue G115 forms a Glycyl lysine isopeptide (Gly-Lys) (interchain with K-? in acceptor proteins) linkage.

It belongs to the URM1 family. C-terminal thiocarboxylation occurs in 2 steps, it is first acyl-adenylated (-COAMP) via the hesA/moeB/thiF part of UBA4, then thiocarboxylated (-COSH) via the rhodanese domain of UBA4.

It localises to the cytoplasm. It participates in tRNA modification; 5-methoxycarbonylmethyl-2-thiouridine-tRNA biosynthesis. Its function is as follows. Acts as a sulfur carrier required for 2-thiolation of mcm(5)S(2)U at tRNA wobble positions of cytosolic tRNA(Lys), tRNA(Glu) and tRNA(Gln). Serves as sulfur donor in tRNA 2-thiolation reaction by being thiocarboxylated (-COSH) at its C-terminus by the MOCS3 homolog UBA4. The sulfur is then transferred to tRNA to form 2-thiolation of mcm(5)S(2)U. Prior mcm(5) tRNA modification by the elongator complex is required for 2-thiolation. Also acts as a ubiquitin-like protein (UBL) that is covalently conjugated via an isopeptide bond to lysine residues of target proteins such as AHP1. The thiocarboxylated form serves as substrate for conjugation and oxidative stress specifically induces the formation of UBL-protein conjugates. This chain is Ubiquitin-related modifier 1, found in Coccidioides immitis (strain RS) (Valley fever fungus).